A 695-amino-acid chain; its full sequence is Threonine--tRNA ligase (695 aa).

The region spanning 1–76 is the TGS domain; that stretch reads MPRIPSPPQA…TTTDVVEPVT (76 aa). The segment at 279–585 is catalytic; sequence DHRKLGVELD…LLEHHAGAFP (307 aa). Positions 384, 435, and 562 each coordinate Zn(2+).

The protein belongs to the class-II aminoacyl-tRNA synthetase family. Homodimer. Zn(2+) is required as a cofactor.

Its subcellular location is the cytoplasm. The enzyme catalyses tRNA(Thr) + L-threonine + ATP = L-threonyl-tRNA(Thr) + AMP + diphosphate + H(+). Functionally, catalyzes the attachment of threonine to tRNA(Thr) in a two-step reaction: L-threonine is first activated by ATP to form Thr-AMP and then transferred to the acceptor end of tRNA(Thr). Also edits incorrectly charged L-seryl-tRNA(Thr). This Leifsonia xyli subsp. xyli (strain CTCB07) protein is Threonine--tRNA ligase.